We begin with the raw amino-acid sequence, 109 residues long: Phosphoribosyl-ATP pyrophosphatase (109 aa).

Belongs to the PRA-PH family.

It is found in the cytoplasm. The enzyme catalyses 1-(5-phospho-beta-D-ribosyl)-ATP + H2O = 1-(5-phospho-beta-D-ribosyl)-5'-AMP + diphosphate + H(+). It participates in amino-acid biosynthesis; L-histidine biosynthesis; L-histidine from 5-phospho-alpha-D-ribose 1-diphosphate: step 2/9. In Marinobacter nauticus (strain ATCC 700491 / DSM 11845 / VT8) (Marinobacter aquaeolei), this protein is Phosphoribosyl-ATP pyrophosphatase.